Consider the following 201-residue polypeptide: Orotate phosphoribosyltransferase (201 aa).

5-phospho-alpha-D-ribose 1-diphosphate is bound by residues lysine 90 and 113-121 (EDIITTGGS). Orotate-binding residues include threonine 117 and arginine 145.

The protein belongs to the purine/pyrimidine phosphoribosyltransferase family. PyrE subfamily. As to quaternary structure, homodimer. Requires Mg(2+) as cofactor.

The enzyme catalyses orotidine 5'-phosphate + diphosphate = orotate + 5-phospho-alpha-D-ribose 1-diphosphate. It functions in the pathway pyrimidine metabolism; UMP biosynthesis via de novo pathway; UMP from orotate: step 1/2. In terms of biological role, catalyzes the transfer of a ribosyl phosphate group from 5-phosphoribose 1-diphosphate to orotate, leading to the formation of orotidine monophosphate (OMP). This chain is Orotate phosphoribosyltransferase, found in Sulfurovum sp. (strain NBC37-1).